A 61-amino-acid polypeptide reads, in one-letter code: Phosphoenolpyruvate synthase (61 aa).

The protein belongs to the PEP-utilizing enzyme family. Requires Mg(2+) as cofactor.

It catalyses the reaction pyruvate + ATP + H2O = phosphoenolpyruvate + AMP + phosphate + 2 H(+). The protein operates within carbohydrate biosynthesis; gluconeogenesis. In terms of biological role, catalyzes the phosphorylation of pyruvate to phosphoenolpyruvate. The protein is Phosphoenolpyruvate synthase (ppsA) of Enterobacter agglomerans (Erwinia herbicola).